Reading from the N-terminus, the 61-residue chain is Photosystem II reaction center protein K (61 aa).

The propeptide occupies 1–24; that stretch reads MINIVSLVCIYINSVPYSSIFFLD. A helical membrane pass occupies residues 36 to 56; that stretch reads IVDIMPVIPLFFFLLAFVWQA.

It belongs to the PsbK family. As to quaternary structure, PSII is composed of 1 copy each of membrane proteins PsbA, PsbB, PsbC, PsbD, PsbE, PsbF, PsbH, PsbI, PsbJ, PsbK, PsbL, PsbM, PsbT, PsbX, PsbY, PsbZ, Psb30/Ycf12, at least 3 peripheral proteins of the oxygen-evolving complex and a large number of cofactors. It forms dimeric complexes.

The protein resides in the plastid. It localises to the chloroplast thylakoid membrane. In terms of biological role, one of the components of the core complex of photosystem II (PSII). PSII is a light-driven water:plastoquinone oxidoreductase that uses light energy to abstract electrons from H(2)O, generating O(2) and a proton gradient subsequently used for ATP formation. It consists of a core antenna complex that captures photons, and an electron transfer chain that converts photonic excitation into a charge separation. This Lotus japonicus (Lotus corniculatus var. japonicus) protein is Photosystem II reaction center protein K.